Here is a 261-residue protein sequence, read N- to C-terminus: tRNA pseudouridine synthase A (261 aa).

D51 (nucleophile) is an active-site residue. A substrate-binding site is contributed by Y109.

Belongs to the tRNA pseudouridine synthase TruA family. Homodimer.

It catalyses the reaction uridine(38/39/40) in tRNA = pseudouridine(38/39/40) in tRNA. In terms of biological role, formation of pseudouridine at positions 38, 39 and 40 in the anticodon stem and loop of transfer RNAs. This is tRNA pseudouridine synthase A from Shewanella sp. (strain MR-4).